The following is a 562-amino-acid chain: Ikaros family zinc finger protein (562 aa).

3 consecutive C2H2-type zinc fingers follow at residues 45–67, 73–95, and 101–123; these read IKCE…IRSH, FKCH…YKIH, and FQCP…MRIH. Residues 129–152 form a C2H2-type 4; degenerate zinc finger; sequence YRCSYCARSYKSRQSMKEHEYQCP. 4 disordered regions span residues 178 to 210, 293 to 342, 361 to 404, and 451 to 473; these read NPLA…PPYP, QNQQ…VKPT, QLED…KEDD, and DESK…STQD. Residues 307–326 are compositionally biased toward low complexity; sequence PSLSEATPSSHSSHSSAEDS. A compositionally biased stretch (polar residues) spans 327 to 336; it reads GQVNKFSPTE. The span at 369–383 shows a compositional bias: basic and acidic residues; sequence DSRKRPHSFESEPTP. Over residues 456 to 471 the composition is skewed to polar residues; sequence EISSVDSRSPLDQSST. C2H2-type zinc fingers lie at residues 494 to 516 and 522 to 546; these read WECK…MGVH and LVCN…HHQH.

The protein belongs to the Ikaros C2H2-type zinc-finger protein family. As to expression, expression is strongest in the anterior Fol cells of the oikoplastic epithelium.

The protein localises to the nucleus. The polypeptide is Ikaros family zinc finger protein (Oikopleura dioica (Tunicate)).